The chain runs to 260 residues: Transforming acid coiled-coil-containing protein 1 (260 aa).

The disordered stretch occupies residues 1-43 (MSLNTTFTKEDGTEVVIPFNGSQNGHPENEEPEVEEAAEPSSS). Residues 108–249 (ASSEELEKAL…CDQLLNDVDV (142 aa)) adopt a coiled-coil conformation.

It belongs to the TACC family. In terms of assembly, interacts with zyg-9 to form a heterodimer. Interacts with zyg-8 to form a heterodimer. Interacts with efa-6 (via N-terminus). As to expression, expressed in touch neurons.

It is found in the cytoplasm. The protein resides in the cytoskeleton. It localises to the spindle pole. The protein localises to the microtubule organizing center. Its subcellular location is the centrosome. It is found in the chromosome. The protein resides in the centromere. It localises to the kinetochore. The protein localises to the cell projection. Its subcellular location is the axon. It is found in the perikaryon. Involved in microtubule formation, polymerization and assembly, regulating microtubule nucleation and length. Plays a role in pronuclear migration and mitotic and meiotic spindle elongation during early embryogenesis. In complex with zyg-9, functions during the early stages of embryonic development to regulate microtubule assembly throughout the cell cycle. Specifically, the complex is required for the formation and growth of astral microtubules and spindle microtubules during mitotic spindle assembly. At anaphase, the complex is required for mitotic spindle positioning in one-cell stage embryos. The complex acts in a partially redundant manner with the tac-1/zyg-8 complex to regulate microtubule assembly and processes during interphase, mitosis and meiosis in embryos. Plays a role in injury-induced axonal regrowth, regeneration and microtubule stability in PLM neurons and this may be downstream of efa-6. The chain is Transforming acid coiled-coil-containing protein 1 from Caenorhabditis elegans.